Consider the following 310-residue polypeptide: uncharacterized protein (310 aa).

His239 is an active-site residue.

This sequence belongs to the IUNH family.

The protein localises to the cytoplasm. Its subcellular location is the nucleus. This is an uncharacterized protein from Schizosaccharomyces pombe (strain 972 / ATCC 24843) (Fission yeast).